A 180-amino-acid chain; its full sequence is Major urinary protein 6 (180 aa).

Residues 1-18 (MKMLLLLCLGLTLVCVHA) form the signal peptide. Cys82 and Cys175 are oxidised to a cystine.

Belongs to the calycin superfamily. Lipocalin family. As to expression, abundant in the urine of adult male mice but absent from that of females.

The protein resides in the secreted. Binds pheromones that are released from drying urine of males. These pheromones affect the sexual behavior of females. This Mus musculus (Mouse) protein is Major urinary protein 6 (Mup6).